The chain runs to 220 residues: Glycerol-3-phosphate acyltransferase (220 aa).

The next 6 membrane-spanning stretches (helical) occupy residues 11 to 31, 70 to 90, 96 to 116, 127 to 147, 153 to 173, and 192 to 212; these read INVIFTLLGYLIGGIPFGYAL, LLVLILDLFKGMFAVFLSKLF, LQWMVAIASILGHCYSPFLNF, GSVVLLIPIESLIGLTVWFFV, ISSLASILGVGTATVLIFFVP, and PMVLIFIFTLIKHAGNIFNLL.

The protein belongs to the PlsY family. As to quaternary structure, probably interacts with PlsX.

It localises to the cell inner membrane. The catalysed reaction is an acyl phosphate + sn-glycerol 3-phosphate = a 1-acyl-sn-glycero-3-phosphate + phosphate. It participates in lipid metabolism; phospholipid metabolism. Functionally, catalyzes the transfer of an acyl group from acyl-phosphate (acyl-PO(4)) to glycerol-3-phosphate (G3P) to form lysophosphatidic acid (LPA). This enzyme utilizes acyl-phosphate as fatty acyl donor, but not acyl-CoA or acyl-ACP. This Helicobacter pylori (strain J99 / ATCC 700824) (Campylobacter pylori J99) protein is Glycerol-3-phosphate acyltransferase.